The sequence spans 125 residues: Large ribosomal subunit protein bL12 (125 aa).

This sequence belongs to the bacterial ribosomal protein bL12 family. Homodimer. Part of the ribosomal stalk of the 50S ribosomal subunit. Forms a multimeric L10(L12)X complex, where L10 forms an elongated spine to which 2 to 4 L12 dimers bind in a sequential fashion. Binds GTP-bound translation factors.

Forms part of the ribosomal stalk which helps the ribosome interact with GTP-bound translation factors. Is thus essential for accurate translation. This Campylobacter lari (strain RM2100 / D67 / ATCC BAA-1060) protein is Large ribosomal subunit protein bL12.